Consider the following 203-residue polypeptide: Large ribosomal subunit protein uL13 (203 aa).

A2 carries the post-translational modification N-acetylalanine. A Citrulline modification is found at R59. S77 carries the post-translational modification Phosphoserine; by ZIPK/DAPK3. The residue at position 140 (R140) is a Citrulline. K191 carries the post-translational modification N6-acetyllysine.

Belongs to the universal ribosomal protein uL13 family. In terms of assembly, component of the 60S ribosome. Component of the GAIT complex. Interacts with EIF4G1. Post-translationally, phosphorylation at Ser-77 upon interferon-gamma treatment in monocytes involves a DAPK1-DAPK3 kinase cascade and is causing release from the ribosome, association with the GAIT complex and subsequent involvement in transcript-selective translation inhibition. Citrullinated by PADI4.

The protein resides in the cytoplasm. Associated with ribosomes but is not required for canonical ribosome function and has extra-ribosomal functions. Component of the GAIT (gamma interferon-activated inhibitor of translation) complex which mediates interferon-gamma-induced transcript-selective translation inhibition in inflammation processes. Upon interferon-gamma activation and subsequent phosphorylation dissociates from the ribosome and assembles into the GAIT complex which binds to stem loop-containing GAIT elements in the 3'-UTR of diverse inflammatory mRNAs (such as ceruplasmin) and suppresses their translation. In the GAIT complex interacts with m7G cap-bound eIF4G at or near the eIF3-binding site and blocks the recruitment of the 43S ribosomal complex. Involved in methylation of rRNA. In Homo sapiens (Human), this protein is Large ribosomal subunit protein uL13 (RPL13A).